A 743-amino-acid polypeptide reads, in one-letter code: Phosphoribosylformylglycinamidine synthase subunit PurL (743 aa).

Histidine 50 is a catalytic residue. Positions 53 and 92 each coordinate ATP. Mg(2+) is bound at residue glutamate 94. Substrate contacts are provided by residues 95 to 98 (SHNH) and arginine 117. The Proton acceptor role is filled by histidine 96. Residue aspartate 118 participates in Mg(2+) binding. Glutamine 241 is a binding site for substrate. Aspartate 269 is a Mg(2+) binding site. 313–315 (ESQ) is a substrate binding site. Positions 495 and 532 each coordinate ATP. Asparagine 533 contributes to the Mg(2+) binding site. Serine 535 serves as a coordination point for substrate.

This sequence belongs to the FGAMS family. As to quaternary structure, monomer. Part of the FGAM synthase complex composed of 1 PurL, 1 PurQ and 2 PurS subunits.

It is found in the cytoplasm. It catalyses the reaction N(2)-formyl-N(1)-(5-phospho-beta-D-ribosyl)glycinamide + L-glutamine + ATP + H2O = 2-formamido-N(1)-(5-O-phospho-beta-D-ribosyl)acetamidine + L-glutamate + ADP + phosphate + H(+). The protein operates within purine metabolism; IMP biosynthesis via de novo pathway; 5-amino-1-(5-phospho-D-ribosyl)imidazole from N(2)-formyl-N(1)-(5-phospho-D-ribosyl)glycinamide: step 1/2. Functionally, part of the phosphoribosylformylglycinamidine synthase complex involved in the purines biosynthetic pathway. Catalyzes the ATP-dependent conversion of formylglycinamide ribonucleotide (FGAR) and glutamine to yield formylglycinamidine ribonucleotide (FGAM) and glutamate. The FGAM synthase complex is composed of three subunits. PurQ produces an ammonia molecule by converting glutamine to glutamate. PurL transfers the ammonia molecule to FGAR to form FGAM in an ATP-dependent manner. PurS interacts with PurQ and PurL and is thought to assist in the transfer of the ammonia molecule from PurQ to PurL. This chain is Phosphoribosylformylglycinamidine synthase subunit PurL, found in Rhizobium etli (strain ATCC 51251 / DSM 11541 / JCM 21823 / NBRC 15573 / CFN 42).